We begin with the raw amino-acid sequence, 451 residues long: Protein NINJA homolog 1 (451 aa).

3 disordered regions span residues 1–223 (MDDE…QGNP), 321–346 (ISQA…DDKK), and 427–451 (DAPG…SAQN). A compositionally biased stretch (basic and acidic residues) spans 23 to 35 (KARDAPLEPKAEP). 3 stretches are compositionally biased toward polar residues: residues 38–49 (EESSSKGVSQTP), 86–103 (PGSS…QKPV), and 143–153 (ISISTDDGSTG). Positions 154–163 (ENEDVAESEA) are enriched in acidic residues. Residues 207-216 (SFSGSESSSG) are compositionally biased toward low complexity.

It belongs to the Ninja family. As to quaternary structure, interacts with TIFY10C/JAZ8. Interacts with TIFY11A/JAZ9.

Its subcellular location is the nucleus. This Oryza sativa subsp. japonica (Rice) protein is Protein NINJA homolog 1.